Here is a 92-residue protein sequence, read N- to C-terminus: Small ribosomal subunit protein uS19 (92 aa).

This sequence belongs to the universal ribosomal protein uS19 family.

Functionally, protein S19 forms a complex with S13 that binds strongly to the 16S ribosomal RNA. The sequence is that of Small ribosomal subunit protein uS19 from Francisella tularensis subsp. tularensis (strain FSC 198).